We begin with the raw amino-acid sequence, 379 residues long: Armadillo repeat-containing X-linked protein 3 (379 aa).

Residues 1–6 are Mitochondrial intermembrane-facing; the sequence is MGYARK. Mitochondrion outer membrane (MOM)-targeting sequence regions lie at residues 1–6 and 26–37; these read MGYARK and RLTRGRKQNKEK. A helical; Signal-anchor membrane pass occupies residues 7–29; it reads VGWVTAGLVIGAGACYCIYRLTR. The Cytoplasmic segment spans residues 30 to 379; the sequence is GRKQNKEKMA…TERMFPKSQE (350 aa). Residues 34–69 form a disordered region; that stretch reads NKEKMAEGGPGDVEDAGDCSGARYNDWSDDDDDSNE. 3 positions are modified to phosphoserine: Ser-61, Ser-67, and Ser-72. Positions 89-98 are nuclear localization signal; that stretch reads RARARARARA. Ser-110 bears the Phosphoserine mark. ARM repeat units follow at residues 111–151, 153–192, and 233–272; these read PNSD…NNAA, AFNRDIIRDLGGLPIVAKILNTRDPIVKEKALIVLNNLSV, and VTNEYQHILANSISDFFRLFSAGNEETKLQVLKLLLNLAE.

It belongs to the eutherian X-chromosome-specific Armcx family. As to quaternary structure, interacts (via ARM domain) with MIRO1, MIRO2 and TRAK2. The interaction with Miro is calcium-dependent. Interacts with Sox10.

The protein localises to the mitochondrion outer membrane. Its subcellular location is the cytoplasm. It localises to the nucleus. In terms of biological role, regulates mitochondrial aggregation and transport in axons in living neurons. May link mitochondria to the Trak2-kinesin motor complex via its interaction with Miro and Trak2. Mitochondrial distribution and dynamics is regulated through Armcx3 protein degradation, which is promoted by PCK and negatively regulated by Wnt1. Enhances the Sox10-mediated transactivation of the neuronal acetylcholine receptor subunit alpha-3 and beta-4 subunit gene promoters. The protein is Armadillo repeat-containing X-linked protein 3 (Armcx3) of Rattus norvegicus (Rat).